We begin with the raw amino-acid sequence, 199 residues long: Recombination protein RecR (199 aa).

The C4-type zinc finger occupies 58–73 (CSRCFYFTEEDPCPLC). In terms of domain architecture, Toprim spans 81–176 (QLICVVEEPQ…KVTRLAHGIP (96 aa)).

It belongs to the RecR family.

Functionally, may play a role in DNA repair. It seems to be involved in an RecBC-independent recombinational process of DNA repair. It may act with RecF and RecO. This chain is Recombination protein RecR, found in Syntrophotalea carbinolica (strain DSM 2380 / NBRC 103641 / GraBd1) (Pelobacter carbinolicus).